A 380-amino-acid polypeptide reads, in one-letter code: O-phospho-L-seryl-tRNA:Cys-tRNA synthase (380 aa).

Residues 86 to 87 (AR), Asn192, and 215 to 217 (SGH) contribute to the pyridoxal 5'-phosphate site. Lys218 is modified (N6-(pyridoxal phosphate)lysine).

It belongs to the SepCysS family. In terms of assembly, homodimer. Interacts with SepRS. Requires pyridoxal 5'-phosphate as cofactor.

It carries out the reaction O-phospho-L-seryl-tRNA(Cys) + hydrogen sulfide + H(+) = L-cysteinyl-tRNA(Cys) + phosphate. In terms of biological role, converts O-phospho-L-seryl-tRNA(Cys) (Sep-tRNA(Cys)) to L-cysteinyl-tRNA(Cys) (Cys-tRNA(Cys)). This is O-phospho-L-seryl-tRNA:Cys-tRNA synthase from Methanococcus maripaludis (strain C7 / ATCC BAA-1331).